The sequence spans 370 residues: Probable trehalose-phosphate phosphatase 6 (370 aa).

Belongs to the trehalose phosphatase family. A divalent metal cation is required as a cofactor.

The catalysed reaction is alpha,alpha-trehalose 6-phosphate + H2O = alpha,alpha-trehalose + phosphate. Its pathway is glycan biosynthesis; trehalose biosynthesis. Its function is as follows. Removes the phosphate from trehalose 6-phosphate to produce free trehalose. Trehalose accumulation in plant may improve abiotic stress tolerance. The sequence is that of Probable trehalose-phosphate phosphatase 6 (TPP6) from Oryza sativa subsp. japonica (Rice).